Here is a 492-residue protein sequence, read N- to C-terminus: Spore germination protein GerLA (492 aa).

Transmembrane regions (helical) follow at residues 295–315, 384–404, and 410–430; these read IIAVLLPAMYVALVSYHQGLI, FLVIIIAVTAIATFSLPVYSI, and ILLFVFVLAATAFGLYGIILA.

Belongs to the GerABKA family.

The protein localises to the membrane. In terms of biological role, contributes to the L-alanine germination response. The chain is Spore germination protein GerLA (gerLA) from Bacillus cereus.